A 415-amino-acid chain; its full sequence is Probable glucuronosyltransferase Os01g0926600 (415 aa).

Residues 1-4 (MAMR) are Cytoplasmic-facing. A helical; Signal-anchor for type II membrane protein membrane pass occupies residues 5 to 25 (LSSAAVALALLLAATALEDVA). Residues 26 to 415 (RGQDTERIEG…QGPVGDLKPW (390 aa)) are Lumenal-facing. N-linked (GlcNAc...) asparagine glycans are attached at residues asparagine 142 and asparagine 403.

The protein belongs to the glycosyltransferase 47 family.

The protein localises to the golgi apparatus membrane. In terms of biological role, involved in the synthesis of glucuronoxylan hemicellulose in secondary cell walls. The chain is Probable glucuronosyltransferase Os01g0926600 from Oryza sativa subsp. japonica (Rice).